A 263-amino-acid chain; its full sequence is L-aspartate dehydrogenase (263 aa).

Residues Ala120 and Asn186 each contribute to the NAD(+) site. The active site involves His216.

The protein belongs to the L-aspartate dehydrogenase family.

The enzyme catalyses L-aspartate + NADP(+) + H2O = oxaloacetate + NH4(+) + NADPH + H(+). It catalyses the reaction L-aspartate + NAD(+) + H2O = oxaloacetate + NH4(+) + NADH + H(+). It functions in the pathway cofactor biosynthesis; NAD(+) biosynthesis; iminoaspartate from L-aspartate (dehydrogenase route): step 1/1. Its function is as follows. Specifically catalyzes the NAD or NADP-dependent dehydrogenation of L-aspartate to iminoaspartate. This is L-aspartate dehydrogenase from Psychrobacter cryohalolentis (strain ATCC BAA-1226 / DSM 17306 / VKM B-2378 / K5).